Reading from the N-terminus, the 239-residue chain is Derlin-2 (239 aa).

Residues 1-56 (MAYQSLRLEYLQIPPVSRAYTTACVLTTAAVQLELITPFQLYFNPELIFKHFQIWR) are Cytoplasmic-facing. The helical transmembrane segment at 57-77 (LITNFLFFGPVGFNFLFNMIF) threads the bilayer. Topologically, residues 78-98 (LYRYCRMLEEGSFRGRTADFV) are lumenal. Residues 99 to 119 (FMFLFGGFLMTLFGLFVSLVF) traverse the membrane as a helical segment. The Cytoplasmic portion of the chain corresponds to 120–150 (LGQAFTIMLVYVWSRRNPYVRMNFFGLLNFQ). A helical membrane pass occupies residues 151–171 (APFLPWVLMGFSLLLGNSIIV). Position 172 (Asp172) is a topological domain, lumenal. Residues 173 to 193 (LLGIAVGHIYFFLEDVFPNQP) traverse the membrane as a helical segment. Topologically, residues 194–239 (GGIRILKTPSILKAIFDTPDEDPNYNPLPEERPGGFAWGEGQRLGG) are cytoplasmic. The tract at residues 215–239 (DPNYNPLPEERPGGFAWGEGQRLGG) is disordered. Residues 229 to 239 (FAWGEGQRLGG) show a composition bias toward gly residues.

Belongs to the derlin family. Forms homo- and heterooligomers with DERL3 and, to a lesser extent, with DERL1. Interacts with the SEL1L/SYVN1 and VCP/SELENOS protein complexes. Mediates association between VCP and EDEM1, as well as that between VCP and the misfolded glycoproteins. Interacts with OS9. Interacts with SELENOK and SELENOS. Interacts with the signal recognition particle/SRP and the SRP receptor; in the process of endoplasmic reticulum stress-induced pre-emptive quality control. Interacts with CCDC47.

The protein resides in the endoplasmic reticulum membrane. Functionally, functional component of endoplasmic reticulum-associated degradation (ERAD) for misfolded lumenal glycoproteins, but not that of misfolded nonglycoproteins. May act by forming a channel that allows the retrotranslocation of misfolded glycoproteins into the cytosol where they are ubiquitinated and degraded by the proteasome. May mediate the interaction between VCP and misfolded glycoproteins. May also be involved in endoplasmic reticulum stress-induced pre-emptive quality control, a mechanism that selectively attenuates the translocation of newly synthesized proteins into the endoplasmic reticulum and reroutes them to the cytosol for proteasomal degradation. The protein is Derlin-2 of Pongo abelii (Sumatran orangutan).